Here is a 257-residue protein sequence, read N- to C-terminus: Probable pectate lyase E (257 aa).

The N-terminal stretch at 1–17 is a signal peptide; sequence MYQKLLLVPLLLTSALA.

The protein belongs to the polysaccharide lyase 3 family. Requires Ca(2+) as cofactor.

It localises to the secreted. The enzyme catalyses Eliminative cleavage of (1-&gt;4)-alpha-D-galacturonan to give oligosaccharides with 4-deoxy-alpha-D-galact-4-enuronosyl groups at their non-reducing ends.. Pectinolytic enzyme consist of four classes of enzymes: pectin lyase, polygalacturonase, pectin methylesterase and rhamnogalacturonase. Among pectinolytic enzymes, pectin lyase is the most important in depolymerization of pectin, since it cleaves internal glycosidic bonds of highly methylated pectins. Favors pectate, the anion, over pectin, the methyl ester. In Aspergillus flavus (strain ATCC 200026 / FGSC A1120 / IAM 13836 / NRRL 3357 / JCM 12722 / SRRC 167), this protein is Probable pectate lyase E (plyE).